A 218-amino-acid polypeptide reads, in one-letter code: Putative glutamine transport system permease protein GlnP (218 aa).

The region spanning 19 to 208 is the ABC transmembrane type-1 domain; it reads TLVTLKYSVI…ILVILISFIA (190 aa). 4 consecutive transmembrane segments (helical) span residues 25-45, 57-79, 86-108, and 187-207; these read YSVI…ICKV, FYTS…FAAP, FNVF…SEVI, and FFPM…ISFI.

It belongs to the binding-protein-dependent transport system permease family. HisMQ subfamily.

The protein localises to the cell inner membrane. Its function is as follows. Part of the binding-protein-dependent transport system for glutamine; probably responsible for the translocation of the substrate across the membrane. The protein is Putative glutamine transport system permease protein GlnP (glnP) of Rickettsia prowazekii (strain Madrid E).